The primary structure comprises 594 residues: Kelch domain-containing protein 7B (594 aa).

The disordered stretch occupies residues 1–174 (MVLRSHPFPR…PAGRSGALTE (174 aa)). A compositionally biased stretch (gly residues) spans 49–58 (IGTGTGGLVE). Over residues 64–74 (QPRSSETNGSP) the composition is skewed to polar residues. Positions 104 to 115 (PAQPPAQRPPGP) are enriched in pro residues. The segment covering 116–126 (AASSSARRSQP) has biased composition (low complexity). 5 Kelch repeats span residues 306-354 (EEPP…TMHN), 355-405 (YLFL…ALDG), 406-448 (LLYA…AVAC), 451-493 (DIYV…ALGG), and 495-538 (LYRF…TTLG).

This is Kelch domain-containing protein 7B (KLHDC7B) from Homo sapiens (Human).